We begin with the raw amino-acid sequence, 338 residues long: Formamidase (338 aa).

The 244-residue stretch at Val14–Pro257 folds into the CN hydrolase domain. Glu60 (proton acceptor) is an active-site residue. Lys129 (proton donor) is an active-site residue. Cys162 (nucleophile) is an active-site residue.

Belongs to the carbon-nitrogen hydrolase superfamily. Aliphatic amidase family.

The enzyme catalyses formamide + H2O = formate + NH4(+). Functionally, is an aliphatic amidase with a restricted substrate specificity, as it only hydrolyzes formamide. The polypeptide is Formamidase (Allorhizobium ampelinum (strain ATCC BAA-846 / DSM 112012 / S4) (Agrobacterium vitis (strain S4))).